The chain runs to 87 residues: Small ribosomal subunit protein uS17 (87 aa).

This sequence belongs to the universal ribosomal protein uS17 family. As to quaternary structure, part of the 30S ribosomal subunit.

One of the primary rRNA binding proteins, it binds specifically to the 5'-end of 16S ribosomal RNA. The protein is Small ribosomal subunit protein uS17 of Dichelobacter nodosus (strain VCS1703A).